The following is a 250-amino-acid chain: MKIKEKMTDFGFSYVKKSKKNSMIEDIFNNVSYKYDLMNDIMSFGVHRIWKNILVYCNSTNPDQKILDLASGTGDITKRLSKLINKKGFIVSLDINRKMLKICRKKIRNSGTIRNIFYIQANSEYLPFKKNIFDSVIVSFGFRNFTEKKKQLSSIFNVLKPGGKLLILEFSKPLFEFLKKIYDIYSFYCIPKMGNIISGNYYSYKYLVESIKIHPSQKKLNKILSESEFCNSEYINISGGIVAIHRCYKF.

S-adenosyl-L-methionine is bound by residues threonine 73, aspartate 94, 122-123 (NS), and serine 139.

It belongs to the class I-like SAM-binding methyltransferase superfamily. MenG/UbiE family.

The catalysed reaction is a 2-demethylmenaquinol + S-adenosyl-L-methionine = a menaquinol + S-adenosyl-L-homocysteine + H(+). It carries out the reaction a 2-methoxy-6-(all-trans-polyprenyl)benzene-1,4-diol + S-adenosyl-L-methionine = a 5-methoxy-2-methyl-3-(all-trans-polyprenyl)benzene-1,4-diol + S-adenosyl-L-homocysteine + H(+). The protein operates within quinol/quinone metabolism; menaquinone biosynthesis; menaquinol from 1,4-dihydroxy-2-naphthoate: step 2/2. Its pathway is cofactor biosynthesis; ubiquinone biosynthesis. In terms of biological role, methyltransferase required for the conversion of demethylmenaquinol (DMKH2) to menaquinol (MKH2) and the conversion of 2-polyprenyl-6-methoxy-1,4-benzoquinol (DDMQH2) to 2-polyprenyl-3-methyl-6-methoxy-1,4-benzoquinol (DMQH2). This chain is Ubiquinone/menaquinone biosynthesis C-methyltransferase UbiE, found in Wigglesworthia glossinidia brevipalpis.